The following is a 187-amino-acid chain: Threonylcarbamoyl-AMP synthase (187 aa).

A YrdC-like domain is found at 4–187; that stretch reads TLDLDRAVAT…DARSGQILRD (184 aa).

The protein belongs to the SUA5 family. TsaC subfamily.

It localises to the cytoplasm. The catalysed reaction is L-threonine + hydrogencarbonate + ATP = L-threonylcarbamoyladenylate + diphosphate + H2O. In terms of biological role, required for the formation of a threonylcarbamoyl group on adenosine at position 37 (t(6)A37) in tRNAs that read codons beginning with adenine. Catalyzes the conversion of L-threonine, HCO(3)(-)/CO(2) and ATP to give threonylcarbamoyl-AMP (TC-AMP) as the acyladenylate intermediate, with the release of diphosphate. The chain is Threonylcarbamoyl-AMP synthase from Xanthomonas euvesicatoria pv. vesicatoria (strain 85-10) (Xanthomonas campestris pv. vesicatoria).